The sequence spans 240 residues: UDP-2,3-diacylglucosamine hydrolase (240 aa).

Mn(2+) is bound by residues Asp8, His10, Asp41, Asn79, and His114. Position 79 to 80 (Asn79 to Arg80) interacts with substrate. Residues Asp122, Ser160, Asn164, Lys167, and His195 each coordinate substrate. 2 residues coordinate Mn(2+): His195 and His197.

It belongs to the LpxH family. Mn(2+) is required as a cofactor.

It localises to the cell inner membrane. It carries out the reaction UDP-2-N,3-O-bis[(3R)-3-hydroxytetradecanoyl]-alpha-D-glucosamine + H2O = 2-N,3-O-bis[(3R)-3-hydroxytetradecanoyl]-alpha-D-glucosaminyl 1-phosphate + UMP + 2 H(+). It functions in the pathway glycolipid biosynthesis; lipid IV(A) biosynthesis; lipid IV(A) from (3R)-3-hydroxytetradecanoyl-[acyl-carrier-protein] and UDP-N-acetyl-alpha-D-glucosamine: step 4/6. Its function is as follows. Hydrolyzes the pyrophosphate bond of UDP-2,3-diacylglucosamine to yield 2,3-diacylglucosamine 1-phosphate (lipid X) and UMP by catalyzing the attack of water at the alpha-P atom. Involved in the biosynthesis of lipid A, a phosphorylated glycolipid that anchors the lipopolysaccharide to the outer membrane of the cell. The sequence is that of UDP-2,3-diacylglucosamine hydrolase from Escherichia coli O127:H6 (strain E2348/69 / EPEC).